The sequence spans 195 residues: Putative nucleotidase BH1399 (195 aa).

Belongs to the 5'(3')-deoxyribonucleotidase family.

The polypeptide is Putative nucleotidase BH1399 (Halalkalibacterium halodurans (strain ATCC BAA-125 / DSM 18197 / FERM 7344 / JCM 9153 / C-125) (Bacillus halodurans)).